The sequence spans 277 residues: Large ribosomal subunit protein uL2 (277 aa).

Residues 211–277 are disordered; it reads SRWKGVRPTV…KLIVRGRKKK (67 aa).

It belongs to the universal ribosomal protein uL2 family. As to quaternary structure, part of the 50S ribosomal subunit. Forms a bridge to the 30S subunit in the 70S ribosome.

One of the primary rRNA binding proteins. Required for association of the 30S and 50S subunits to form the 70S ribosome, for tRNA binding and peptide bond formation. It has been suggested to have peptidyltransferase activity; this is somewhat controversial. Makes several contacts with the 16S rRNA in the 70S ribosome. The polypeptide is Large ribosomal subunit protein uL2 (Staphylococcus epidermidis (strain ATCC 35984 / DSM 28319 / BCRC 17069 / CCUG 31568 / BM 3577 / RP62A)).